Consider the following 326-residue polypeptide: 3-isopropylmalate dehydrogenase (326 aa).

Substrate-binding residues include Arg81, Arg91, Arg112, and Asp198. Residues Asp198, Asp222, and Asp226 each contribute to the Mg(2+) site. 255-267 provides a ligand contact to NAD(+); it reads GAAFDIAGKGIAN.

Belongs to the isocitrate and isopropylmalate dehydrogenases family. As to quaternary structure, homotetramer. Mg(2+) serves as cofactor. Requires Mn(2+) as cofactor.

It localises to the cytoplasm. The enzyme catalyses (2R,3S)-3-isopropylmalate + NAD(+) = 4-methyl-2-oxopentanoate + CO2 + NADH. The protein operates within amino-acid biosynthesis; L-leucine biosynthesis; L-leucine from 3-methyl-2-oxobutanoate: step 3/4. Catalyzes the oxidation of 3-carboxy-2-hydroxy-4-methylpentanoate (3-isopropylmalate) to 3-carboxy-4-methyl-2-oxopentanoate. The product decarboxylates to 4-methyl-2 oxopentanoate. This Archaeoglobus fulgidus (strain ATCC 49558 / DSM 4304 / JCM 9628 / NBRC 100126 / VC-16) protein is 3-isopropylmalate dehydrogenase (leuB).